Here is a 1103-residue protein sequence, read N- to C-terminus: Trophozoite exported protein 1 (1103 aa).

Residues 173–212 adopt a coiled-coil conformation; it reads KKEKIEDKKYEQDDEEENEEEEEEEEEEEGEEENKEDEEF. Disordered regions lie at residues 178-210 and 271-301; these read EDKKYEQDDEEENEEEEEEEEEEEGEEENKEDE and KSYSGDEKINTSDNAKSCSGDEKVITSDNGK. Positions 184–210 are enriched in acidic residues; it reads QDDEEENEEEEEEEEEEEGEEENKEDE. The span at 271-280 shows a compositional bias: basic and acidic residues; it reads KSYSGDEKIN. Coiled coils occupy residues 304 to 330 and 478 to 518; these read DYVKNESEEQEEKENMLNNKKRSLECN and YKNY…KLNN. Positions 544–601 are disordered; it reads YFDEGENPYNRNNKNYRTDNKNSDDNNNNNNYYYNNYNSDDNYNSEDNEYNNGNYRFR. The segment covering 568 to 585 has biased composition (low complexity); the sequence is DNNNNNNYYYNNYNSDDN. Coiled coils occupy residues 650-791, 819-932, and 993-1030; these read FRNL…LSGI, DEKY…IYKK, and NKKLIGHCQDLEKENSTLQNKLSNEIKNSKMLSKNLSK. An RING-type zinc finger spans residues 1050–1089; sequence CSVCMENFRNYIIIKCGHIYCNNCIFNNLKTRNRKCPQCK.

It localises to the host cell membrane. In Plasmodium falciparum (isolate 3D7), this protein is Trophozoite exported protein 1.